Reading from the N-terminus, the 494-residue chain is MLVAMSMTPIAILFSTPLKRFLREKVLLGNAPSWELLAILSIYFVQGVLGLSRLAVSFFLKDELGLSPAAMGALIGLGAAPWILKPVLGLMSDTVPLFGYRRRSYLWLSGLMGSAGWLLFAAWVSSGTQAGLVLLFTSLSVAIGDVIVDSLVVERAQRESLAQVGSLQSLTWGAAAVGGIITAYASGALLEWFSTRTVFAITAIFPLLTVGAAFLISEVSTAEEEEKPQPKAQIKLVWQAVRQKTILLPTLFIFFWQATPSAESAFFYFTTNELGFEPKFLGRVRLVTSVAGLIGVGLYQRFLKTLPFRVIMGWSTVISSLLGLTTLILITHANRAMGIDDHWFSLGDSIILTVTGQIAFMPVLVLAARLCPPGIEATLFALLMSVMNLAGVLSFEVGSLLTHWLGVTETQFDNLALLVIITNLSTLLPLPFLGLLPAGDPQVKDKTEKEDNPDDPGDRLVLPPAEVFEHHTVGSLSDQNFLPEFFPEKSSSRP.

Helical transmembrane passes span 31-51 (APSW…VLGL), 64-84 (LGLS…PWIL), 104-124 (SYLW…AAWV), 133-153 (VLLF…SLVV), 170-190 (LTWG…GALL), 197-217 (TVFA…FLIS), 246-266 (ILLP…ESAF), 284-303 (VRLV…QRFL), 310-330 (VIMG…LILI), 346-366 (LGDS…VLVL), 375-395 (IEAT…VLSF), and 415-435 (LALL…FLGL). The disordered stretch occupies residues 441–461 (PQVKDKTEKEDNPDDPGDRLV).

This sequence belongs to the major facilitator superfamily. Folate-biopterin transporter (TC 2.A.71) family.

It localises to the cell membrane. In terms of biological role, mediates folate monoglutamate transport involved in tetrahydrofolate biosynthesis. It also mediates transport of antifolates, such as methotrexate and aminopterin. The chain is Folate-biopterin transporter from Synechocystis sp. (strain ATCC 27184 / PCC 6803 / Kazusa).